Reading from the N-terminus, the 439-residue chain is Homogentisate 1,2-dioxygenase (439 aa).

Fe cation is bound by residues His335, Glu341, and His371.

The protein belongs to the homogentisate dioxygenase family. Fe cation serves as cofactor.

The catalysed reaction is homogentisate + O2 = 4-maleylacetoacetate + H(+). The protein operates within amino-acid degradation; L-phenylalanine degradation; acetoacetate and fumarate from L-phenylalanine: step 4/6. This Drosophila melanogaster (Fruit fly) protein is Homogentisate 1,2-dioxygenase.